The chain runs to 856 residues: DNA mismatch repair protein MutS (856 aa).

618–625 contributes to the ATP binding site; that stretch reads GPNMGGKS.

Belongs to the DNA mismatch repair MutS family.

This protein is involved in the repair of mismatches in DNA. It is possible that it carries out the mismatch recognition step. This protein has a weak ATPase activity. In Shewanella baltica (strain OS223), this protein is DNA mismatch repair protein MutS.